We begin with the raw amino-acid sequence, 332 residues long: D-galactose/methyl-galactoside binding periplasmic protein MglB (332 aa).

The signal sequence occupies residues 1 to 23 (MNKKVLTLSAVMASLLFGAHAHA). Positions 37 and 114 each coordinate beta-D-galactose. The beta-D-glucose site is built by D37 and N114. Residues D157, N159, D161, K163, and Q165 each coordinate Ca(2+). Beta-D-galactose-binding residues include H175, D177, and R181. Beta-D-glucose is bound by residues H175, D177, and R181. Residue E228 participates in Ca(2+) binding. Residues N234, D259, and N279 each coordinate beta-D-galactose. Residues N234, D259, and N279 each contribute to the beta-D-glucose site.

It belongs to the bacterial solute-binding protein 2 family. The ABC transporter complex is composed of one ATP-binding protein (MglA), two transmembrane proteins (MglC) and a solute-binding protein (MglB).

The protein resides in the periplasm. Its function is as follows. Part of the ABC transporter complex MglABC involved in galactose/methyl galactoside import. In addition, binds D-galactose and D-glucose and plays a role in the chemotaxis towards these two sugars by interacting with the Trg chemoreceptor. The chain is D-galactose/methyl-galactoside binding periplasmic protein MglB (mglB) from Salmonella typhimurium (strain LT2 / SGSC1412 / ATCC 700720).